The primary structure comprises 288 residues: Bis(5'-nucleosyl)-tetraphosphatase, symmetrical (288 aa).

It belongs to the Ap4A hydrolase family.

It catalyses the reaction P(1),P(4)-bis(5'-adenosyl) tetraphosphate + H2O = 2 ADP + 2 H(+). Hydrolyzes diadenosine 5',5'''-P1,P4-tetraphosphate to yield ADP. This is Bis(5'-nucleosyl)-tetraphosphatase, symmetrical from Pseudomonas putida (strain GB-1).